The chain runs to 23 residues: Basic phospholipase A2 homolog (23 aa).

Post-translationally, contains 7 disulfide bonds. In terms of tissue distribution, expressed by the venom gland.

The protein resides in the secreted. This chain is Basic phospholipase A2 homolog, found in Trimeresurus stejnegeri (Chinese green tree viper).